The following is a 205-amino-acid chain: Holliday junction branch migration complex subunit RuvA (205 aa).

The domain I stretch occupies residues methionine 1–asparagine 67. The interval threonine 68 to valine 146 is domain II. The segment at alanine 147–tyrosine 150 is flexible linker. The interval tyrosine 150–alanine 205 is domain III.

Belongs to the RuvA family. In terms of assembly, homotetramer. Forms an RuvA(8)-RuvB(12)-Holliday junction (HJ) complex. HJ DNA is sandwiched between 2 RuvA tetramers; dsDNA enters through RuvA and exits via RuvB. An RuvB hexamer assembles on each DNA strand where it exits the tetramer. Each RuvB hexamer is contacted by two RuvA subunits (via domain III) on 2 adjacent RuvB subunits; this complex drives branch migration. In the full resolvosome a probable DNA-RuvA(4)-RuvB(12)-RuvC(2) complex forms which resolves the HJ.

The protein resides in the cytoplasm. In terms of biological role, the RuvA-RuvB-RuvC complex processes Holliday junction (HJ) DNA during genetic recombination and DNA repair, while the RuvA-RuvB complex plays an important role in the rescue of blocked DNA replication forks via replication fork reversal (RFR). RuvA specifically binds to HJ cruciform DNA, conferring on it an open structure. The RuvB hexamer acts as an ATP-dependent pump, pulling dsDNA into and through the RuvAB complex. HJ branch migration allows RuvC to scan DNA until it finds its consensus sequence, where it cleaves and resolves the cruciform DNA. The sequence is that of Holliday junction branch migration complex subunit RuvA from Mycoplasma genitalium (strain ATCC 33530 / DSM 19775 / NCTC 10195 / G37) (Mycoplasmoides genitalium).